The sequence spans 410 residues: LL-diaminopimelate aminotransferase (410 aa).

Residues Tyr15 and Gly42 each contribute to the substrate site. Pyridoxal 5'-phosphate is bound by residues Tyr72, 108 to 109 (SK), Tyr132, Asn187, Tyr218, and 246 to 248 (SFS). Residues Lys109, Tyr132, and Asn187 each contribute to the substrate site. N6-(pyridoxal phosphate)lysine is present on Lys249. 2 residues coordinate pyridoxal 5'-phosphate: Arg257 and Asn292. Substrate contacts are provided by Asn292 and Arg388.

Belongs to the class-I pyridoxal-phosphate-dependent aminotransferase family. LL-diaminopimelate aminotransferase subfamily. In terms of assembly, homodimer. Pyridoxal 5'-phosphate is required as a cofactor.

The catalysed reaction is (2S,6S)-2,6-diaminopimelate + 2-oxoglutarate = (S)-2,3,4,5-tetrahydrodipicolinate + L-glutamate + H2O + H(+). Its pathway is amino-acid biosynthesis; L-lysine biosynthesis via DAP pathway; LL-2,6-diaminopimelate from (S)-tetrahydrodipicolinate (aminotransferase route): step 1/1. In terms of biological role, involved in the synthesis of meso-diaminopimelate (m-DAP or DL-DAP), required for both lysine and peptidoglycan biosynthesis. Catalyzes the direct conversion of tetrahydrodipicolinate to LL-diaminopimelate. This is LL-diaminopimelate aminotransferase from Geobacter metallireducens (strain ATCC 53774 / DSM 7210 / GS-15).